Reading from the N-terminus, the 291-residue chain is MSMSSIFSRPRLVVKKVLARAQNEGDGAIVRRSIGRPELQNLDPFLMLDEFSVSQPAGFPDHPHRGFETVTYMLQGAFTHQDFAGHKGTIRTGDVQWMTAGRGIVHSEMPAGPGTQKGLQLWINLSSKDKMIEPRYQELLHQDIPKAEKDGVSVTILAGESMGKKSQVFTRTPTMYLDFTLKPGSEHHQPIPETWNAFLYIVEGEGAFGSSDSTTTPAHHCLVLGPGEGLSVWNKSSKPLRFVLIGGQPINEPVVQYGPFVMNTKSEIMQAYQDYQLGKNGFERSRQWYSK.

It belongs to the pirin family.

The protein resides in the nucleus. The polypeptide is Pirin-like protein (Solanum lycopersicum (Tomato)).